The chain runs to 449 residues: UDP-N-acetylmuramoylalanine--D-glutamate ligase (449 aa).

Residue 118–124 (GSNGKTT) coordinates ATP.

Belongs to the MurCDEF family.

Its subcellular location is the cytoplasm. It catalyses the reaction UDP-N-acetyl-alpha-D-muramoyl-L-alanine + D-glutamate + ATP = UDP-N-acetyl-alpha-D-muramoyl-L-alanyl-D-glutamate + ADP + phosphate + H(+). The protein operates within cell wall biogenesis; peptidoglycan biosynthesis. Cell wall formation. Catalyzes the addition of glutamate to the nucleotide precursor UDP-N-acetylmuramoyl-L-alanine (UMA). The polypeptide is UDP-N-acetylmuramoylalanine--D-glutamate ligase (Oceanobacillus iheyensis (strain DSM 14371 / CIP 107618 / JCM 11309 / KCTC 3954 / HTE831)).